The primary structure comprises 206 residues: Putative transporter protein AmiS2 (206 aa).

The next 7 helical transmembrane spans lie at 4 to 24 (VGLLYVGAVLFVNGLMLLGTV), 29 to 49 (ASVLNLFVGALQCVVPTVMLI), 56 to 76 (SAVLAASGLYLFGFTYLYVGI), 86 to 106 (GIGWFSLFVACAALVYSFLSF), 113 to 133 (VFGVIWLAWAALWTLFFLVLG), 142 to 162 (FTGWAAILLSQPTCTVPAFLI), and 173 to 193 (VAAGWAGALLVLLGLAKILAA).

The protein belongs to the AmiS/UreI family.

It is found in the cell membrane. Possible transporter that might be responsible for the adsorption of amidase substrates or release of their hydrolysis products. The protein is Putative transporter protein AmiS2 (amiS2) of Rhodococcus erythropolis (Arthrobacter picolinophilus).